The primary structure comprises 2542 residues: Probable polyketide synthase 41 (2542 aa).

One can recognise a Ketosynthase family 3 (KS3) domain in the interval 11–441 (CNKVAIIGIG…GSNCCLIVSS (431 aa)). Residues cysteine 177, histidine 318, and histidine 360 each act as for beta-ketoacyl synthase activity in the active site. The acyl/malonyl transferase stretch occupies residues 628–661 (GIKPSIIVGHSLGEISSSYCSGMIDLDTFCYLIY). Serine 638 acts as the For acyl/malonyl transferase activity in catalysis. The segment at 926–1059 (INHLGISNSN…ANFQLFSRGP (134 aa)) is N-terminal hotdog fold. The region spanning 926–1231 (INHLGISNSN…FKSTTKIKDP (306 aa)) is the PKS/mFAS DH domain. The active-site Proton acceptor; for dehydratase activity is the histidine 959. The interval 1083 to 1231 (NLTKLSKQEL…FKSTTKIKDP (149 aa)) is C-terminal hotdog fold. Aspartate 1145 functions as the Proton donor; for dehydratase activity in the catalytic mechanism. The Carrier domain maps to 2459–2537 (NVELTVDQLI…SFIQLVKNSM (79 aa)). Serine 2496 is modified (O-(pantetheine 4'-phosphoryl)serine).

It depends on pantetheine 4'-phosphate as a cofactor.

In terms of biological role, probable polyketide synthase. In Dictyostelium discoideum (Social amoeba), this protein is Probable polyketide synthase 41 (pks41).